The following is a 450-amino-acid chain: FAD-linked oxidoreductase ptmO (450 aa).

The FAD-binding PCMH-type domain maps to 32-203; it reads PPELPYAIVR…TRFFIRTRPA (172 aa).

Belongs to the oxygen-dependent FAD-linked oxidoreductase family. Requires FAD as cofactor.

Its pathway is secondary metabolite biosynthesis. Functionally, FAD-linked oxidoreductase; part of the gene cluster that mediates the biosynthesis of the indole diterpenes penitrems. The geranylgeranyl diphosphate (GGPP) synthase ptmG catalyzes the first step in penitrem biosynthesis via conversion of farnesyl pyrophosphate and isopentyl pyrophosphate into geranylgeranyl pyrophosphate (GGPP). Condensation of indole-3-glycerol phosphate with GGPP by the prenyl transferase ptmC then forms 3-geranylgeranylindole (3-GGI). Epoxidation by the FAD-dependent monooxygenase ptmM leads to a epoxidized-GGI that is substrate of the terpene cyclase ptmB for cyclization to yield paspaline. Paspaline is subsequently converted to 13-desoxypaxilline by the cytochrome P450 monooxygenase ptmP, the latter being then converted to paxilline by the cytochrome P450 monooxygenase ptmQ. Paxilline is converted to beta-paxitriol via C-10 ketoreduction by the short-chain dehydrogenase ptmH which can be monoprenylated at the C-20 by the indole diterpene prenyltransferase ptmD. A two-step elimination (acetylation and elimination) process performed by the O-acetyltransferase ptmV and ptmI leads to the production of the prenylated form of penijanthine. The FAD-linked oxidoreductase ptmO then converts the prenylated form of penijanthine into PC-M5 which is in turn transformed into PC-M4 by the aromatic dimethylallyltransferase ptmE. Five sequential oxidative transformations performed by the cytochrome P450 monooxygenases ptmK, ptmU, ptmL, ptmN and ptmJ yield the various penitrem compounds. PtmK, ptmU and ptmM are involved in the formation of the key bicyclic ring of penitrem C via the formation of the intermediates secopenitrem D and penitrem D. PtmL catalyzes the epoxidation of penitrem D and C to yield penitrem B and F, respectively. PtmJ catalyzes the last benzylic hydroxylation to convert penitrem B to prenitrem E and penitrem F to penitrem A. The chain is FAD-linked oxidoreductase ptmO from Penicillium ochrochloron.